Reading from the N-terminus, the 126-residue chain is Aspartate 1-decarboxylase (126 aa).

Ser25 (schiff-base intermediate with substrate; via pyruvic acid) is an active-site residue. Ser25 is subject to Pyruvic acid (Ser). Thr57 contributes to the substrate binding site. The active-site Proton donor is the Tyr58. 73 to 75 serves as a coordination point for substrate; sequence GAA.

The protein belongs to the PanD family. Heterooctamer of four alpha and four beta subunits. The cofactor is pyruvate. Post-translationally, is synthesized initially as an inactive proenzyme, which is activated by self-cleavage at a specific serine bond to produce a beta-subunit with a hydroxyl group at its C-terminus and an alpha-subunit with a pyruvoyl group at its N-terminus.

Its subcellular location is the cytoplasm. It catalyses the reaction L-aspartate + H(+) = beta-alanine + CO2. It functions in the pathway cofactor biosynthesis; (R)-pantothenate biosynthesis; beta-alanine from L-aspartate: step 1/1. Functionally, catalyzes the pyruvoyl-dependent decarboxylation of aspartate to produce beta-alanine. The chain is Aspartate 1-decarboxylase from Erwinia tasmaniensis (strain DSM 17950 / CFBP 7177 / CIP 109463 / NCPPB 4357 / Et1/99).